The sequence spans 397 residues: Argininosuccinate synthase (397 aa).

7-15 (LYSGGLDTS) is a binding site for ATP. Tyr-83 is a binding site for L-citrulline. Gly-113 contributes to the ATP binding site. L-aspartate-binding residues include Thr-115, Asn-119, and Asp-120. Asn-119 contacts L-citrulline. Positions 123, 169, 178, 253, and 265 each coordinate L-citrulline.

It belongs to the argininosuccinate synthase family. Type 1 subfamily. In terms of assembly, homotetramer.

It is found in the cytoplasm. The enzyme catalyses L-citrulline + L-aspartate + ATP = 2-(N(omega)-L-arginino)succinate + AMP + diphosphate + H(+). It participates in amino-acid biosynthesis; L-arginine biosynthesis; L-arginine from L-ornithine and carbamoyl phosphate: step 2/3. This is Argininosuccinate synthase from Thermoplasma volcanium (strain ATCC 51530 / DSM 4299 / JCM 9571 / NBRC 15438 / GSS1).